The primary structure comprises 273 residues: Shikimate dehydrogenase (NADP(+)) (273 aa).

Residues serine 18 to serine 20 and threonine 65 contribute to the shikimate site. The Proton acceptor role is filled by lysine 69. Glutamate 81 is an NADP(+) binding site. Asparagine 90 and aspartate 105 together coordinate shikimate. NADP(+) contacts are provided by residues glycine 130–alanine 134, asparagine 154–lysine 159, and methionine 217. Tyrosine 219 is a binding site for shikimate. Position 240 (glycine 240) interacts with NADP(+).

Belongs to the shikimate dehydrogenase family. Homodimer.

The enzyme catalyses shikimate + NADP(+) = 3-dehydroshikimate + NADPH + H(+). It functions in the pathway metabolic intermediate biosynthesis; chorismate biosynthesis; chorismate from D-erythrose 4-phosphate and phosphoenolpyruvate: step 4/7. Its function is as follows. Involved in the biosynthesis of the chorismate, which leads to the biosynthesis of aromatic amino acids. Catalyzes the reversible NADPH linked reduction of 3-dehydroshikimate (DHSA) to yield shikimate (SA). This Janthinobacterium sp. (strain Marseille) (Minibacterium massiliensis) protein is Shikimate dehydrogenase (NADP(+)).